We begin with the raw amino-acid sequence, 243 residues long: MLIAYLTAGAPDINTTKEAVMKLAKKGADVIEIGVPYSDALADGAILQKASKQALMNGFHLDHLWNLLSEVNEIEVPLVILAYYNQIWHYGVEKWVKKLVAHNVKGLIVPDLPYEESKTLRQICDRYGLNIIWLISPTTNKTRAQELARACKDWIYVISRTGVTGLETEFDKQIPKLIGELKKVTKAPIALGFGISKSEQVKLVKSWGADGVIIGSACMQILLEKGVDQLSEWISVMKKSFCP.

Catalysis depends on proton acceptor residues Glu-32 and Asp-43.

The protein belongs to the TrpA family. As to quaternary structure, tetramer of two alpha and two beta chains.

It is found in the plastid. It localises to the chloroplast. The catalysed reaction is (1S,2R)-1-C-(indol-3-yl)glycerol 3-phosphate + L-serine = D-glyceraldehyde 3-phosphate + L-tryptophan + H2O. It functions in the pathway amino-acid biosynthesis; L-tryptophan biosynthesis; L-tryptophan from chorismate: step 5/5. The alpha subunit is responsible for the aldol cleavage of indoleglycerol phosphate to indole and glyceraldehyde 3-phosphate. This Cyanidioschyzon merolae (strain NIES-3377 / 10D) (Unicellular red alga) protein is Tryptophan synthase alpha chain.